Here is a 72-residue protein sequence, read N- to C-terminus: Exodeoxyribonuclease 7 small subunit (72 aa).

This sequence belongs to the XseB family. As to quaternary structure, heterooligomer composed of large and small subunits.

Its subcellular location is the cytoplasm. The enzyme catalyses Exonucleolytic cleavage in either 5'- to 3'- or 3'- to 5'-direction to yield nucleoside 5'-phosphates.. In terms of biological role, bidirectionally degrades single-stranded DNA into large acid-insoluble oligonucleotides, which are then degraded further into small acid-soluble oligonucleotides. The sequence is that of Exodeoxyribonuclease 7 small subunit from Chlamydia trachomatis serovar D (strain ATCC VR-885 / DSM 19411 / UW-3/Cx).